The sequence spans 84 residues: Small ribosomal subunit protein bS18 (84 aa).

The protein belongs to the bacterial ribosomal protein bS18 family. In terms of assembly, part of the 30S ribosomal subunit. Forms a tight heterodimer with protein bS6.

In terms of biological role, binds as a heterodimer with protein bS6 to the central domain of the 16S rRNA, where it helps stabilize the platform of the 30S subunit. This chain is Small ribosomal subunit protein bS18, found in Vesicomyosocius okutanii subsp. Calyptogena okutanii (strain HA).